A 220-amino-acid polypeptide reads, in one-letter code: Adenylate kinase (220 aa).

10–15 serves as a coordination point for ATP; that stretch reads GSGKST. The interval 30–59 is NMP; it reads SSGDIIRAEISSRTPLGLEMEKYLSRGDLI. AMP-binding positions include Ser31, Arg36, 57–59, 83–86, and Gln90; these read DLI and GYPR. The LID stretch occupies residues 124–161; sequence GRRICSKCGAVYHIEFNPPKIPGKCDICGGDLIQRPDD. ATP is bound at residue Arg125. Zn(2+) is bound by residues Cys128 and Cys131. Residue 134–135 coordinates ATP; it reads VY. Zn(2+)-binding residues include Cys148 and Cys151. 2 residues coordinate AMP: Arg158 and Arg169. Gly197 contacts ATP.

This sequence belongs to the adenylate kinase family. Monomer.

It is found in the cytoplasm. It catalyses the reaction AMP + ATP = 2 ADP. The protein operates within purine metabolism; AMP biosynthesis via salvage pathway; AMP from ADP: step 1/1. Its function is as follows. Catalyzes the reversible transfer of the terminal phosphate group between ATP and AMP. Plays an important role in cellular energy homeostasis and in adenine nucleotide metabolism. The polypeptide is Adenylate kinase (Pyrococcus horikoshii (strain ATCC 700860 / DSM 12428 / JCM 9974 / NBRC 100139 / OT-3)).